Consider the following 109-residue polypeptide: uncharacterized protein (109 aa).

The disordered stretch occupies residues 77–98 (TRTGHAYPRFTRPSFPSCNRNG).

This is an uncharacterized protein from Homo sapiens (Human).